A 515-amino-acid polypeptide reads, in one-letter code: GMP synthase [glutamine-hydrolyzing] (515 aa).

One can recognise a Glutamine amidotransferase type-1 domain in the interval 10-200; that stretch reads TIIVLDFGSQ…VFGVCGCSEG (191 aa). Cys-87 acts as the Nucleophile in catalysis. Residues His-174 and Glu-176 contribute to the active site. The GMPS ATP-PPase domain occupies 201–390; that stretch reads WNMENFIEVE…LGIPDEIVWR (190 aa). An ATP-binding site is contributed by 228–234; that stretch reads SGGVDSS.

Homodimer.

It catalyses the reaction XMP + L-glutamine + ATP + H2O = GMP + L-glutamate + AMP + diphosphate + 2 H(+). It functions in the pathway purine metabolism; GMP biosynthesis; GMP from XMP (L-Gln route): step 1/1. In terms of biological role, catalyzes the synthesis of GMP from XMP. This Bacillus anthracis (strain A0248) protein is GMP synthase [glutamine-hydrolyzing].